Consider the following 211-residue polypeptide: Large ribosomal subunit protein uL3 (211 aa).

The residue at position 150 (Gln-150) is an N5-methylglutamine.

The protein belongs to the universal ribosomal protein uL3 family. In terms of assembly, part of the 50S ribosomal subunit. Forms a cluster with proteins L14 and L19. Post-translationally, methylated by PrmB.

Its function is as follows. One of the primary rRNA binding proteins, it binds directly near the 3'-end of the 23S rRNA, where it nucleates assembly of the 50S subunit. The chain is Large ribosomal subunit protein uL3 from Pseudomonas fluorescens (strain SBW25).